Consider the following 229-residue polypeptide: Cytidylate kinase (229 aa).

12-20 (GPSGSGKGT) contributes to the ATP binding site.

Belongs to the cytidylate kinase family. Type 1 subfamily.

It localises to the cytoplasm. It catalyses the reaction CMP + ATP = CDP + ADP. The catalysed reaction is dCMP + ATP = dCDP + ADP. The chain is Cytidylate kinase from Pseudomonas syringae pv. tomato (strain ATCC BAA-871 / DC3000).